The following is a 136-amino-acid chain: Heme-binding protein Rv0203 (136 aa).

The signal sequence occupies residues 1–27 (MKTGTATTRRRLLAVLIALALPGAAVA). C41 and C115 are joined by a disulfide. Residues Y60, H64, and H90 each coordinate heme.

Dimer of dimers.

It is found in the secreted. In terms of biological role, part of a heme-iron acquisition system. Acts by binding heme and delivering it to the membrane proteins MmpL3 and MmpL11. Can use free heme or heme from host hemoglobin. The polypeptide is Heme-binding protein Rv0203 (Mycobacterium tuberculosis (strain ATCC 25618 / H37Rv)).